The chain runs to 1887 residues: Bifunctional serine/threonine-protein kinase/NEDD4-like E3 ubiquitin-protein ligase (1887 aa).

2 disordered regions span residues 19–55 and 72–98; these read TPQV…TTNF and TDNY…TKEN. 2 stretches are compositionally biased toward low complexity: residues 26–54 and 72–97; these read NNSN…STTN and TDNY…NTKE. RCC1 repeat units follow at residues 206-260, 262-314, 356-409, 411-470, 472-528, and 529-581; these read QGNL…ALTI, GKVY…NNNN, KGLL…VLTN, GLVF…AISD, NDTY…AMSI, and DGSL…IVEK. Residues 299-333 form a disordered region; it reads NNNNNNNNNNSTNNNNNNNNDGAQQQFSLSQNSSS. 3 disordered regions span residues 594–619, 823–858, and 1030–1088; these read LPSS…SDSN, VLVH…KNGT, and DDDN…NNNN. Residues 825–839 show a composition bias toward basic and acidic residues; that stretch reads VHQDEKQQQREKSET. Acidic residues predominate over residues 840-852; sequence ELEEEQDEEEEDS. Positions 1036–1088 are enriched in low complexity; sequence ENNSVNNNSNNNNNNNNNNNNNNNNNNNNNNNIDNNINSNSINDSSNNNNNNN. A Protein kinase domain is found at 1158-1437; that stretch reads YDIIKTLSTH…AHQIAVHPYF (280 aa). ATP is bound by residues 1164–1172 and K1184; that span reads LSTHPHNVY. Catalysis depends on D1281, which acts as the Proton acceptor. The 387-residue stretch at 1501–1887 folds into the HECT domain; the sequence is ESNKLFCRLE…LEYVDGFAFI (387 aa). The interval 1586–1628 is disordered; sequence NNNNNNEENNNNNNNNNNNNNNNNNNNNNNNNNNNNNNNNNEE. C1855 serves as the catalytic Glycyl thioester intermediate.

In the N-terminal section; belongs to the protein kinase superfamily. Ser/Thr protein kinase family. This sequence in the C-terminal section; belongs to the protein kinase superfamily. CAMK Ser/Thr protein kinase family.

The catalysed reaction is L-seryl-[protein] + ATP = O-phospho-L-seryl-[protein] + ADP + H(+). The enzyme catalyses L-threonyl-[protein] + ATP = O-phospho-L-threonyl-[protein] + ADP + H(+). It catalyses the reaction S-ubiquitinyl-[E2 ubiquitin-conjugating enzyme]-L-cysteine + [acceptor protein]-L-lysine = [E2 ubiquitin-conjugating enzyme]-L-cysteine + N(6)-ubiquitinyl-[acceptor protein]-L-lysine.. It participates in protein modification; protein ubiquitination. The polypeptide is Bifunctional serine/threonine-protein kinase/NEDD4-like E3 ubiquitin-protein ligase (Dictyostelium discoideum (Social amoeba)).